Consider the following 150-residue polypeptide: General odorant-binding protein 19d (150 aa).

The signal sequence occupies residues 1–23; the sequence is MSHLVHLTVLLLVGILCLGATSA. 3 disulfide bridges follow: cysteine 41/cysteine 72, cysteine 68/cysteine 126, and cysteine 116/cysteine 135.

It belongs to the PBP/GOBP family. In terms of tissue distribution, expressed in the antenna, mostly on the anterior surface of the third antennal segment. Also detected in the maxillary palps and in cells at the bases of the taste hairs on the proboscis and internal taste organs of the head.

It is found in the secreted. In Drosophila melanogaster (Fruit fly), this protein is General odorant-binding protein 19d (Obp19d).